A 176-amino-acid chain; its full sequence is ATP-dependent protease subunit HslV (176 aa).

Residue threonine 2 is part of the active site. Na(+) is bound by residues glycine 157, cysteine 160, and threonine 163.

The protein belongs to the peptidase T1B family. HslV subfamily. As to quaternary structure, a double ring-shaped homohexamer of HslV is capped on each side by a ring-shaped HslU homohexamer. The assembly of the HslU/HslV complex is dependent on binding of ATP.

Its subcellular location is the cytoplasm. The enzyme catalyses ATP-dependent cleavage of peptide bonds with broad specificity.. With respect to regulation, allosterically activated by HslU binding. Protease subunit of a proteasome-like degradation complex believed to be a general protein degrading machinery. The chain is ATP-dependent protease subunit HslV from Pseudomonas fluorescens (strain ATCC BAA-477 / NRRL B-23932 / Pf-5).